Here is a 111-residue protein sequence, read N- to C-terminus: Antitoxin PrlF (111 aa).

The 48-residue stretch at 12–59 (TTESKVTIRGQTTIPAPVREALKLKPGQDSIHYEILPGGQVFMCRLGD) folds into the SpoVT-AbrB domain.

As to quaternary structure, homodimer; forms a complex with YhaV with stoichiometry PrlF(2)-YhaV(4), possibly as a YhaV(2)-PrlF(2)-YhaV(2) complex like the MazFE complex. This complex is seen to dimerize in solution.

The protein localises to the cytoplasm. Functionally, antitoxin component of a type II toxin-antitoxin (TA) system. Labile antitoxin that binds to the YhaV toxin and neutralizes its ribonuclease activity. Also acts as a transcription factor. The YhaV/PrlF complex binds the prlF-yhaV operon, probably negatively regulating its expression. In terms of biological role, negatively regulates its own expression as well as relieving the export block imposed by high-level synthesis of the LamB-LacZ hybrid protein. Overexpression leads to increased doubling time and also suppresses a htrA (degP) null phenotype. In Escherichia coli (strain K12), this protein is Antitoxin PrlF (prlF).